The following is a 388-amino-acid chain: Na(+)/H(+) antiporter NhaA (388 aa).

Residues 1 to 11 lie on the Cytoplasmic side of the membrane; it reads MKHLHRFFSSD. A helical membrane pass occupies residues 12–31; the sequence is ASGGIILIIAAILAMIMANS. Topologically, residues 32-58 are periplasmic; sequence GATSGWYHDFLETPVQLRVGSLEINKN. The important for dimerization stretch occupies residues 45 to 58; that stretch reads PVQLRVGSLEINKN. A helical transmembrane segment spans residues 59–80; the sequence is MLLWINDALMAVFFLLVGLEVK. Residues 81–96 are Cytoplasmic-facing; the sequence is RELMQGSLASLRQAAF. The chain crosses the membrane as a helical span at residues 97–116; sequence PVIAAIGGMIVPALLYLAFN. Topologically, residues 117–122 are periplasmic; it reads YADPIT. A helical membrane pass occupies residues 123-130; the sequence is REGWAIPA. Topologically, residues 131 to 154 are cytoplasmic; it reads ATDIAFALGVLALLGSRVPLALKI. A helical transmembrane segment spans residues 155-176; that stretch reads FLMALAIIDDLGAIIIIALFYT. Topologically, residues 177-180 are periplasmic; it reads NDLS. A helical membrane pass occupies residues 181 to 200; that stretch reads MASLGVAAVAIAVLAVLNLC. The Cytoplasmic portion of the chain corresponds to 201-204; the sequence is GARR. A helical membrane pass occupies residues 205 to 222; that stretch reads TGVYILVGVVLWTAVLKS. Position 223 (G223) is a topological domain, periplasmic. The helical transmembrane segment at 224–236 threads the bilayer; that stretch reads VHATLAGVIVGFF. Residues 237-253 are Cytoplasmic-facing; sequence IPLKEKHGRSPAKRLEH. A helical transmembrane segment spans residues 254–272; it reads VLHPWVAYLILPLFAFANA. Topologically, residues 273–286 are periplasmic; sequence GVSLQGVTLDGLTS. A helical transmembrane segment spans residues 287–310; sequence ILPLGIIAGLLIGKPLGISLFCWL. Residues 311 to 339 lie on the Cytoplasmic side of the membrane; the sequence is ALRLKLAHLPEGTTYQQIMVVGILCGIGF. A helical membrane pass occupies residues 340-350; that stretch reads TMSIFIASLAF. The Periplasmic segment spans residues 351 to 357; the sequence is GSVDPEL. A helical membrane pass occupies residues 358–380; sequence INWAKLGILVGSISSAVIGYSWL. Over 381-388 the chain is Cytoplasmic; that stretch reads RVRLRPSV.

Belongs to the NhaA Na(+)/H(+) (TC 2.A.33) antiporter family. Monomer. Homodimer. Under routine stress conditions, the monomeric form is fully functional. However, the dimeric form is much more efficient in conferring growth resistance under extreme stress conditions.

The protein resides in the cell inner membrane. It carries out the reaction Na(+)(in) + 2 H(+)(out) = Na(+)(out) + 2 H(+)(in). The catalysed reaction is Li(+)(in) + 2 H(+)(out) = Li(+)(out) + 2 H(+)(in). Its activity is regulated as follows. Activity is regulated by pH. Active at alkaline pH. Activity is strongly down-regulated below pH 6.5 and a dramatic increase in activity is observed upon increase of the pH from 6.5 to 8.5. Functionally, na(+)/H(+) antiporter that extrudes sodium in exchange for external protons. Plays an important role in the regulation of intracellular pH, cellular Na(+) content and cell volume. Catalyzes the exchange of 2 H(+) per Na(+). This stoichiometry applies at both neutral and alkaline pH values. In addition, can also transport lithium and is involved in lithium detoxification. Binding of the Li(+) and H(+) ligands to NhaA is coupled and antagonistic. The sequence is that of Na(+)/H(+) antiporter NhaA from Escherichia coli (strain K12).